A 427-amino-acid chain; its full sequence is 3-phosphoshikimate 1-carboxyvinyltransferase (427 aa).

Positions 20, 21, and 25 each coordinate 3-phosphoshikimate. Phosphoenolpyruvate is bound at residue lysine 20. Residues glycine 92 and arginine 120 each coordinate phosphoenolpyruvate. Positions 166, 168, 312, and 339 each coordinate 3-phosphoshikimate. Residue glutamine 168 participates in phosphoenolpyruvate binding. Aspartate 312 acts as the Proton acceptor in catalysis. Residues arginine 343 and arginine 385 each coordinate phosphoenolpyruvate.

It belongs to the EPSP synthase family. As to quaternary structure, monomer.

The protein resides in the cytoplasm. It carries out the reaction 3-phosphoshikimate + phosphoenolpyruvate = 5-O-(1-carboxyvinyl)-3-phosphoshikimate + phosphate. It participates in metabolic intermediate biosynthesis; chorismate biosynthesis; chorismate from D-erythrose 4-phosphate and phosphoenolpyruvate: step 6/7. Its function is as follows. Catalyzes the transfer of the enolpyruvyl moiety of phosphoenolpyruvate (PEP) to the 5-hydroxyl of shikimate-3-phosphate (S3P) to produce enolpyruvyl shikimate-3-phosphate and inorganic phosphate. This chain is 3-phosphoshikimate 1-carboxyvinyltransferase, found in Streptococcus sanguinis (strain SK36).